We begin with the raw amino-acid sequence, 324 residues long: Probable pectinesterase A (324 aa).

A signal peptide spans 1–19 (MHGSLLKLALLSFSLGSSA). Q142 serves as a coordination point for substrate. D165 functions as the Proton donor in the catalytic mechanism. D186 serves as the catalytic Nucleophile. Positions 246 and 248 each coordinate substrate. N285 carries an N-linked (GlcNAc...) asparagine glycan.

The protein belongs to the pectinesterase family.

It localises to the secreted. It carries out the reaction [(1-&gt;4)-alpha-D-galacturonosyl methyl ester](n) + n H2O = [(1-&gt;4)-alpha-D-galacturonosyl](n) + n methanol + n H(+). It participates in glycan metabolism; pectin degradation; 2-dehydro-3-deoxy-D-gluconate from pectin: step 1/5. Functionally, involved in maceration and soft-rotting of plant tissue. This chain is Probable pectinesterase A (pmeA), found in Aspergillus oryzae (strain ATCC 42149 / RIB 40) (Yellow koji mold).